The chain runs to 720 residues: Receptor-like protein CLAVATA2 (720 aa).

An N-terminal signal peptide occupies residues 1 to 25 (MIKIADFTLFFFIFVFSPSLPLAQS). Positions 26–92 (QLPDLDPQDK…LNLSSQIHPS (67 aa)) are N-cap. At 26–686 (QLPDLDPQDK…QNELVEGPIS (661 aa)) the chain is on the extracellular side. Residues asparagine 49, asparagine 62, asparagine 84, asparagine 108, asparagine 127, and asparagine 168 are each glycosylated (N-linked (GlcNAc...) asparagine). Residues cysteine 60 and cysteine 68 are joined by a disulfide bond. 21 LRR repeats span residues 96 to 122 (LSSLQSLDLSHNNFSGNIPSCFGSLRN), 124 to 144 (RTLNLSRNRFVGSIPATFVSL), 146 to 168 (ELREVVLSENRDLGGVVPHWFGN), 170 to 194 (SMNLERVDFSFCSFVGELPESLLYL), 195 to 217 (KSLKYLNLESNNMTGTLRDFQQP), 219 to 238 (VVLNLASNQFSGTLPCFYAS), 239 to 263 (RPSLSILNIAENSLVGGLPSCLGSL), 264 to 287 (KELSHLNLSFNGFNYEISPRLMFS), 288 to 311 (EKLVMLDLSHNGFSGRLPSRISET), 314 to 338 (KLGLVLLDLSHNSFSGDIPLRITEL), 339 to 362 (KSLQALRLSHNLLTGDIPARIGNL), 364 to 386 (YLQVIDLSHNALTGSIPLNIVGC), 388 to 410 (QLLALMISNNNLSGEIQPELDAL), 411 to 436 (DSLKILDISNNHISGEIPLTLAGLKS), 438 to 458 (EIVDISSNNLSGNLNEAITKW), 459 to 482 (SNLKYLSLARNKFSGTLPSWLFKF), 484 to 506 (KIQMIDYSSNRFSWFIPDDNLNS), 547 to 571 (LLSMVGIDLSDNLLHGEIPEALFRQ), 573 to 594 (NIEYLNLSYNFLEGQLPRLEKL), 595 to 617 (PRLKALDLSHNSLSGQVIGNISA), and 619 to 641 (PGLTLLNLSHNCFSGIITEKEGL). Residue asparagine 206 is glycosylated (N-linked (GlcNAc...) asparagine). Asparagine 270 is a glycosylation site (N-linked (GlcNAc...) asparagine). Asparagine 361 is a glycosylation site (N-linked (GlcNAc...) asparagine). N-linked (GlcNAc...) asparagine glycosylation is present at asparagine 398. N-linked (GlcNAc...) asparagine glycosylation is present at asparagine 446. A glycan (N-linked (GlcNAc...) asparagine) is linked at asparagine 505. 3 N-linked (GlcNAc...) asparagine glycosylation sites follow: asparagine 578, asparagine 614, and asparagine 625. Positions 649 to 682 (AGNPELCVETPGSKCDPANIDASQEEIYQNELVE) are C-cap/acidic domain. A helical transmembrane segment spans residues 687–707 (IWIFCLSAFISFDFGVLGIFC). Over 708 to 720 (SARARSYILQTKA) the chain is Cytoplasmic.

Belongs to the RLP family. As to quaternary structure, parts of a tetrameric complex made of two CLV2/CRN heterodimers that can interact with CLV3 and CLE peptides. CLV2/CRN heterodimer interacts with CLV1 homodimers. Interacts with CRN; this dimer can interact with BAM3. Interacts with CLE14. In terms of tissue distribution, mostly expressed in apices (e.g. shoot apical meristem and flower buds), and, to a lower extent, in flowers, leaves, seedlings and siliques. Also expressed in the inner tissues of the proximal root meristem. Expressed throughout the vascular cylinder of root tips.

It localises to the cell membrane. It is found in the endoplasmic reticulum membrane. Its function is as follows. Involved in the perception of CLV3 and CLV3-like (CLE) peptides, that act as extracellular signals regulating meristems maintenance. Required for the sensing of the root CLE peptides (e.g. CLE8, CLE9/CLE10, CLE11, CLE13, CLE14, CLE16, CLE17, CLE18, CLE20, CLE21, CLE25, CLE26, CLE40, CLE41/CLE44 and CLE45), which also involves CRN and leads to root growth regulation, mostly in the phloem and protophloem. Involved in controlling the stem cell population size in shoot and root apical meristems, and during organ development. Promotes the formation of CLV1 multimers. In complex with CRN, perceives secreted CLV3-like effector proteins from plant-parasitic cyst nematodes as ligand mimics of the plant CLE signaling pathway. This recognition is required for proper feeding structure (syncytium) development and ultimately successful nematode infection. CLE14 perception by CLV2/CRN complex triggers root meristem differentiation. The sequence is that of Receptor-like protein CLAVATA2 from Arabidopsis thaliana (Mouse-ear cress).